The following is a 211-amino-acid chain: uncharacterized protein (211 aa).

This is an uncharacterized protein from Mycoplasma pneumoniae (strain ATCC 29342 / M129 / Subtype 1) (Mycoplasmoides pneumoniae).